The following is a 301-amino-acid chain: N-acetylmuramic acid 6-phosphate etherase (301 aa).

Residues 55–215 form the SIS domain; sequence IADALRAGGR…STISMVALGK (161 aa). The Proton donor role is filled by E83. Residue E111 is part of the active site.

Belongs to the GCKR-like family. MurNAc-6-P etherase subfamily. In terms of assembly, homodimer.

It catalyses the reaction N-acetyl-D-muramate 6-phosphate + H2O = N-acetyl-D-glucosamine 6-phosphate + (R)-lactate. Its pathway is amino-sugar metabolism; 1,6-anhydro-N-acetylmuramate degradation. It participates in amino-sugar metabolism; N-acetylmuramate degradation. It functions in the pathway cell wall biogenesis; peptidoglycan recycling. Specifically catalyzes the cleavage of the D-lactyl ether substituent of MurNAc 6-phosphate, producing GlcNAc 6-phosphate and D-lactate. Together with AnmK, is also required for the utilization of anhydro-N-acetylmuramic acid (anhMurNAc) either imported from the medium or derived from its own cell wall murein, and thus plays a role in cell wall recycling. In Burkholderia lata (strain ATCC 17760 / DSM 23089 / LMG 22485 / NCIMB 9086 / R18194 / 383), this protein is N-acetylmuramic acid 6-phosphate etherase.